The chain runs to 158 residues: MPSKNSINRPKLTVNLNKKSQRLGQKRADRERKGLLQPERSSEASKSGEIKSVPLDLYFNGKESNNNSSITTKTLSKKRAKKIERNLKYAQQRKLLVDVQAKEDIDMNVESNKTKGNGKEKTPLTKMKDALWNVIEDTSSQGLTLKTGQGTTLGGPTF.

Residues 1–18 are compositionally biased toward polar residues; sequence MPSKNSINRPKLTVNLNK. A disordered region spans residues 1–51; sequence MPSKNSINRPKLTVNLNKKSQRLGQKRADRERKGLLQPERSSEASKSGEIK. A compositionally biased stretch (basic and acidic residues) spans 26-49; sequence KRADRERKGLLQPERSSEASKSGE.

The protein belongs to the ALB1 family. Component of the nucleoplasmic and cytoplasmic pre-60S ribosomal particles.

Its subcellular location is the cytoplasm. The protein localises to the nucleus. Its function is as follows. Involved in proper assembly of pre-ribosomal particles during the biogenesis of the 60S ribosomal subunit. Accompanies the pre-60S particles to the cytoplasm. This is Ribosome biogenesis protein ALB1 (ALB1) from Vanderwaltozyma polyspora (strain ATCC 22028 / DSM 70294 / BCRC 21397 / CBS 2163 / NBRC 10782 / NRRL Y-8283 / UCD 57-17) (Kluyveromyces polysporus).